We begin with the raw amino-acid sequence, 171 residues long: Large ribosomal subunit protein uL10 (171 aa).

This sequence belongs to the universal ribosomal protein uL10 family. Part of the ribosomal stalk of the 50S ribosomal subunit. The N-terminus interacts with L11 and the large rRNA to form the base of the stalk. The C-terminus forms an elongated spine to which L12 dimers bind in a sequential fashion forming a multimeric L10(L12)X complex.

Functionally, forms part of the ribosomal stalk, playing a central role in the interaction of the ribosome with GTP-bound translation factors. This is Large ribosomal subunit protein uL10 from Corynebacterium efficiens (strain DSM 44549 / YS-314 / AJ 12310 / JCM 11189 / NBRC 100395).